A 283-amino-acid polypeptide reads, in one-letter code: Phosphatidylserine decarboxylase proenzyme (283 aa).

Active-site charge relay system; for autoendoproteolytic cleavage activity residues include D89, H146, and S249. Residue S249 is the Schiff-base intermediate with substrate; via pyruvic acid; for decarboxylase activity of the active site. Pyruvic acid (Ser); by autocatalysis is present on S249.

The protein belongs to the phosphatidylserine decarboxylase family. PSD-B subfamily. Prokaryotic type I sub-subfamily. In terms of assembly, heterodimer of a large membrane-associated beta subunit and a small pyruvoyl-containing alpha subunit. Pyruvate is required as a cofactor. Post-translationally, is synthesized initially as an inactive proenzyme. Formation of the active enzyme involves a self-maturation process in which the active site pyruvoyl group is generated from an internal serine residue via an autocatalytic post-translational modification. Two non-identical subunits are generated from the proenzyme in this reaction, and the pyruvate is formed at the N-terminus of the alpha chain, which is derived from the carboxyl end of the proenzyme. The autoendoproteolytic cleavage occurs by a canonical serine protease mechanism, in which the side chain hydroxyl group of the serine supplies its oxygen atom to form the C-terminus of the beta chain, while the remainder of the serine residue undergoes an oxidative deamination to produce ammonia and the pyruvoyl prosthetic group on the alpha chain. During this reaction, the Ser that is part of the protease active site of the proenzyme becomes the pyruvoyl prosthetic group, which constitutes an essential element of the active site of the mature decarboxylase.

It localises to the cell membrane. It carries out the reaction a 1,2-diacyl-sn-glycero-3-phospho-L-serine + H(+) = a 1,2-diacyl-sn-glycero-3-phosphoethanolamine + CO2. The protein operates within phospholipid metabolism; phosphatidylethanolamine biosynthesis; phosphatidylethanolamine from CDP-diacylglycerol: step 2/2. Functionally, catalyzes the formation of phosphatidylethanolamine (PtdEtn) from phosphatidylserine (PtdSer). This is Phosphatidylserine decarboxylase proenzyme from Legionella pneumophila (strain Lens).